Consider the following 559-residue polypeptide: uncharacterized protein (559 aa).

Transmembrane regions (helical) follow at residues 103 to 123, 139 to 159, 192 to 212, 223 to 243, 263 to 283, 302 to 322, 348 to 368, 387 to 407, 413 to 434, 466 to 486, and 501 to 521; these read LAAL…NGLF, FGYY…LFYY, AGIT…SFPF, FFLI…IFLL, WSWV…TLAV, MLIL…SGVA, AAAF…NISD, IRRA…PWKI, AFLA…IFVA, ALIA…MSIN, and IGYF…NLVF.

The protein belongs to the purine-cytosine permease (2.A.39) family.

Its subcellular location is the golgi apparatus membrane. This is an uncharacterized protein from Schizosaccharomyces pombe (strain 972 / ATCC 24843) (Fission yeast).